A 667-amino-acid polypeptide reads, in one-letter code: Probable E3 ubiquitin-protein ligase HIP1 (667 aa).

2 disordered regions span residues 142-163 and 285-311; these read NGASQGSELHGGCSHTGSNGQA and TTAGLSSSSYDPSGGNNNSGGSQRSFR. Residues 288–309 show a composition bias toward low complexity; it reads GLSSSSYDPSGGNNNSGGSQRS. An RING-type; atypical zinc finger spans residues 620-661; sequence CCICQEEYVDGDDLGTLDCGHDFHVGCVRQWLVVKNTCPICK.

This sequence belongs to the RING-type zinc finger family. Interacts with HAL3.

It carries out the reaction S-ubiquitinyl-[E2 ubiquitin-conjugating enzyme]-L-cysteine + [acceptor protein]-L-lysine = [E2 ubiquitin-conjugating enzyme]-L-cysteine + N(6)-ubiquitinyl-[acceptor protein]-L-lysine.. It participates in protein modification; protein ubiquitination. In terms of biological role, probable E3 ubiquitin-protein ligase that functions downstream of HAL3 and is required for HAL3-regulated plant growth. Activation of HIP1 by HAL3 may lead to the degradation of cell cycle suppressors, resulting in enhancement of cell division and plant growth. This Oryza sativa subsp. japonica (Rice) protein is Probable E3 ubiquitin-protein ligase HIP1 (HIP1).